The chain runs to 259 residues: Sugar fermentation stimulation protein homolog (259 aa).

It belongs to the SfsA family.

The sequence is that of Sugar fermentation stimulation protein homolog from Chloroflexus aurantiacus (strain ATCC 29364 / DSM 637 / Y-400-fl).